Reading from the N-terminus, the 447-residue chain is Citrate synthase-like protein oryE (447 aa).

Catalysis depends on residues His331 and Asp387.

This sequence belongs to the citrate synthase family.

It functions in the pathway secondary metabolite biosynthesis. Citrate synthase-like protein; part of the gene cluster that mediates the biosynthesis of oryzines, natural products with an unusual maleidride backbone. The two subunits of the fungal fatty acid synthase oryfasA and oryfasB probably form octenoic acid. This fatty acid is most likely activated by the acyl-CoA ligase oryP to give octenyl-CoA before the citrate synthase-like protein oryE catalyzes condensation with oxaloacetate to form tricarboxylic acid. The next steps of the pathways are conjectural, but a favorite possible route has been proposed, beginning with decarboxylation and concomitant dehydration by the decarboxylase oryM, followed by tautomerization, which may lead to the production of a diene intermediate. Reduction of this diene intermediate could give the known metabolite piliformic acid. On the pathway to oryzine B and oryzine A, however, hydroxylation of the diene by the alpha-ketoglutarate-dependent dioxygenase oryG and lactonisation by the lactonohydrolases oryH or oryL could give oryzine B directly. Finally, enoyl reduction by the dehydrogenase oryD would then convert oryzine B into oryzine A. This is Citrate synthase-like protein oryE from Aspergillus oryzae (strain ATCC 42149 / RIB 40) (Yellow koji mold).